We begin with the raw amino-acid sequence, 215 residues long: Pyrrolidone-carboxylate peptidase (215 aa).

Residues Glu-80, Cys-143, and His-167 contribute to the active site.

The protein belongs to the peptidase C15 family. As to quaternary structure, homotetramer.

Its subcellular location is the cytoplasm. It carries out the reaction Release of an N-terminal pyroglutamyl group from a polypeptide, the second amino acid generally not being Pro.. Removes 5-oxoproline from various penultimate amino acid residues except L-proline. The chain is Pyrrolidone-carboxylate peptidase from Bacillus cereus (strain B4264).